Consider the following 311-residue polypeptide: Taste receptor type 2 member 9 (311 aa).

At 1–9 (MPSTIEAIY) the chain is on the extracellular side. Residues 10-32 (IILIAGELTIGIWGNGFIVLVNC) form a helical membrane-spanning segment. At 33–52 (IDWLKRRDVSLIDIILISLA) the chain is on the cytoplasmic side. The helical transmembrane segment at 53 to 72 (ISRICLLCVISLDGFFILLF) threads the bilayer. Topologically, residues 73–86 (PGTYDINVLESIMD) are extracellular. Residues 87 to 109 (AVWTFANNSSLWFTSCLSIFYLL) form a helical membrane-spanning segment. Residues 110–128 (KIANISHPFFFWLKLKINK) lie on the Cytoplasmic side of the membrane. The helical transmembrane segment at 129 to 146 (VILAILLGSFLISLIISF) threads the bilayer. Topologically, residues 147 to 179 (PINGXWYHLFKVSHEENITWAFKVSTIPGAFKQ) are extracellular. Asn163 is a glycosylation site (N-linked (GlcNAc...) asparagine). A helical membrane pass occupies residues 180–202 (LTLNLGAMVPFMLCLISFFLLLF). Over 203-233 (SLVRHTKQIQLHATGLRDPSTEAHMRAIKAV) the chain is Cytoplasmic. A helical membrane pass occupies residues 234–256 (IIFLLLLIVYYPVFLVMTSSTLI). The Extracellular portion of the chain corresponds to 257 to 260 (PQGK). A helical membrane pass occupies residues 261-283 (LVLMIGDIVTVIFPSSHSFILIM). Residues 284–311 (GNSKLREAFLKMLRFVKGFLRRRKPFGP) are Cytoplasmic-facing.

It belongs to the G-protein coupled receptor T2R family.

It localises to the membrane. Its function is as follows. Gustducin-coupled receptor implicated in the perception of bitter compounds in the oral cavity and the gastrointestinal tract. Signals through PLCB2 and the calcium-regulated cation channel TRPM5. The sequence is that of Taste receptor type 2 member 9 (TAS2R9) from Papio hamadryas (Hamadryas baboon).